The primary structure comprises 316 residues: Zinc finger protein 330 (316 aa).

The tract at residues 1–24 is disordered; that stretch reads MPKKKTGARKKAENRREREKQLRA. A Nuclear localization signal motif is present at residues 3 to 11; the sequence is KKKTGARKK. Over residues 10–22 the composition is skewed to basic and acidic residues; the sequence is KKAENRREREKQL. 4 C4-type zinc fingers span residues 42 to 58, 67 to 104, 129 to 149, and 175 to 189; these read CDKC…CYFC, CAQC…CDFC, CVEC…CSFC, and CVSC…CLRC. The interval 227–299 is disordered; sequence SMSTRSLKFG…ESSDLFNNLN (73 aa). Acidic residues predominate over residues 268 to 291; the sequence is DDDEEEDEAEDEEEEDGKDSDAES. At serine 287 the chain carries Phosphoserine.

Belongs to the NOA36 family.

It is found in the nucleus. The protein localises to the nucleolus. The protein resides in the chromosome. It localises to the centromere. The chain is Zinc finger protein 330 (Znf330) from Mus musculus (Mouse).